We begin with the raw amino-acid sequence, 207 residues long: MADS-box protein AGL71 (207 aa).

The region spanning 1 to 61 (MVRGKIEIKK…GRLHEYSSSQ (61 aa)) is the MADS-box domain. A K-box domain is found at 88 to 178 (LQELKMEIDR…LEEVNMHHSS (91 aa)).

It is found in the nucleus. Functionally, MADS-box transcription factor that acts with AGL42 and AGL72 in the control of flowering time. Promotes flowering at the shoot apical and axillary meristems. Seems to act through a gibberellin-dependent pathway. Interacts genetically with SOC1 and its expression is directly regulated by SOC1. The sequence is that of MADS-box protein AGL71 (AGL71) from Arabidopsis thaliana (Mouse-ear cress).